The primary structure comprises 88 residues: ATP synthase subunit 9, mitochondrial (88 aa).

Transmembrane regions (helical) follow at residues Ile-8–Phe-28 and Leu-45–Phe-72.

The protein belongs to the ATPase C chain family. F-type ATPases have 2 components, CF(1) - the catalytic core - and CF(0) - the membrane proton channel. CF(1) has five subunits: alpha(3), beta(3), gamma(1), delta(1), epsilon(1). CF(0) has three main subunits: a, b and c.

Its subcellular location is the mitochondrion membrane. It carries out the reaction ATP + H2O + 4 H(+)(in) = ADP + phosphate + 5 H(+)(out). This protein is one of the chains of the nonenzymatic membrane component (F0) of mitochondrial ATPase. The polypeptide is ATP synthase subunit 9, mitochondrial (ATP9) (Beta vulgaris (Sugar beet)).